Here is a 443-residue protein sequence, read N- to C-terminus: UDP-N-acetylmuramate--L-alanine ligase (443 aa).

110 to 116 is an ATP binding site; it reads GAHGKTS.

This sequence belongs to the MurCDEF family.

It is found in the cytoplasm. The catalysed reaction is UDP-N-acetyl-alpha-D-muramate + L-alanine + ATP = UDP-N-acetyl-alpha-D-muramoyl-L-alanine + ADP + phosphate + H(+). The protein operates within cell wall biogenesis; peptidoglycan biosynthesis. In terms of biological role, cell wall formation. The chain is UDP-N-acetylmuramate--L-alanine ligase from Streptococcus suis (strain 98HAH33).